Consider the following 769-residue polypeptide: Intron Large complex component GCFC2 (769 aa).

Disordered stretches follow at residues 1–122 (MALR…PIVE) and 134–212 (RKRE…DENQ). Residues serine 16, serine 17, serine 19, and serine 85 each carry the phosphoserine modification. At threonine 86 the chain carries Phosphothreonine. 2 positions are modified to phosphoserine: serine 118 and serine 169. Basic and acidic residues predominate over residues 190–201 (RMAEETSIRSEE). The segment covering 202 to 212 (SSEESQEDENQ) has biased composition (acidic residues). Phosphoserine occurs at positions 203 and 206. Positions 256–308 (NLEIIKKQLNNRLTLLQESHRSHQREYEKYEQDIKSSKTAIQNLESASDHAQN) form a coiled coil.

It belongs to the GCF family. In terms of assembly, found in the Intron Large (IL) complex, a post-mRNA release spliceosomal complex containing the excised intron, U2, U5 and U6 snRNPs, and splicing factors. Interacts with TFIP11 and DHX15.

Its subcellular location is the nucleus. The protein resides in the nucleoplasm. It is found in the nucleolus. Its function is as follows. Involved in pre-mRNA splicing through regulating spliceosome C complex formation. May play a role during late-stage splicing events and turnover of excised introns. In Mus musculus (Mouse), this protein is Intron Large complex component GCFC2 (Gcfc2).